Consider the following 218-residue polypeptide: Protein-L-isoaspartate O-methyltransferase (218 aa).

Ser66 is a catalytic residue.

Belongs to the methyltransferase superfamily. L-isoaspartyl/D-aspartyl protein methyltransferase family.

The protein localises to the cytoplasm. It carries out the reaction [protein]-L-isoaspartate + S-adenosyl-L-methionine = [protein]-L-isoaspartate alpha-methyl ester + S-adenosyl-L-homocysteine. Catalyzes the methyl esterification of L-isoaspartyl residues in peptides and proteins that result from spontaneous decomposition of normal L-aspartyl and L-asparaginyl residues. It plays a role in the repair and/or degradation of damaged proteins. The protein is Protein-L-isoaspartate O-methyltransferase of Caulobacter sp. (strain K31).